Consider the following 148-residue polypeptide: Urease accessory protein UreE (148 aa).

The protein belongs to the UreE family.

It is found in the cytoplasm. Functionally, involved in urease metallocenter assembly. Binds nickel. Probably functions as a nickel donor during metallocenter assembly. The sequence is that of Urease accessory protein UreE from Aliarcobacter butzleri (strain RM4018) (Arcobacter butzleri).